The chain runs to 305 residues: Protoheme IX farnesyltransferase (305 aa).

9 helical membrane-spanning segments follow: residues 26–46 (VMSL…QPVN), 47–67 (PFVA…SGAL), 98–118 (LAVG…AANW), 119–139 (FAAG…TIWL), 147–167 (IVIG…CATG), 174–194 (LLMF…LALF), 220–240 (IFAY…TSVG), 243–263 (LYLA…WQIL), and 284–304 (LSLY…WVGG).

This sequence belongs to the UbiA prenyltransferase family. Protoheme IX farnesyltransferase subfamily. In terms of assembly, interacts with CtaA.

The protein resides in the cell inner membrane. The enzyme catalyses heme b + (2E,6E)-farnesyl diphosphate + H2O = Fe(II)-heme o + diphosphate. The protein operates within porphyrin-containing compound metabolism; heme O biosynthesis; heme O from protoheme: step 1/1. Functionally, converts heme B (protoheme IX) to heme O by substitution of the vinyl group on carbon 2 of heme B porphyrin ring with a hydroxyethyl farnesyl side group. This Paracoccus denitrificans (strain Pd 1222) protein is Protoheme IX farnesyltransferase.